A 341-amino-acid chain; its full sequence is Probable cytosolic iron-sulfur protein assembly protein Ciao1 (341 aa).

7 WD repeats span residues 12–51 (GHAG…RWVA), 58–97 (GHTR…FECN), 102–141 (GHDN…DQED), 151–190 (GHTQ…SEWE), 197–236 (SHSS…NALG), 255–294 (YHSR…DRNE), and 305–341 (AHSQ…VDAD).

Belongs to the WD repeat CIA1 family.

Functionally, essential component of the cytosolic iron-sulfur (Fe/S) protein assembly machinery. Required for the maturation of extramitochondrial Fe/S proteins. This chain is Probable cytosolic iron-sulfur protein assembly protein Ciao1, found in Anopheles gambiae (African malaria mosquito).